A 363-amino-acid polypeptide reads, in one-letter code: DNA replication and repair protein RecF (363 aa).

An ATP-binding site is contributed by 30 to 37 (GPNGSGKT).

Belongs to the RecF family.

The protein resides in the cytoplasm. The RecF protein is involved in DNA metabolism; it is required for DNA replication and normal SOS inducibility. RecF binds preferentially to single-stranded, linear DNA. It also seems to bind ATP. The polypeptide is DNA replication and repair protein RecF (Vibrio cholerae serotype O1 (strain ATCC 39541 / Classical Ogawa 395 / O395)).